Consider the following 223-residue polypeptide: Neurotrophic factor BDNF precursor form (223 aa).

A signal peptide spans 1 to 5 (SCMKA). The propeptide occupies 6–114 (APMKEVSIRG…AANMSMRVRR (109 aa)). N-linked (GlcNAc...) asparagine glycosylation is present at Asn107. 2 disulfides stabilise this stretch: Cys127/Cys194 and Cys172/Cys223.

It belongs to the NGF-beta family.

It is found in the secreted. In terms of biological role, promotes the survival of neuronal populations that are all located either in the central nervous system or directly connected to it. This is Neurotrophic factor BDNF precursor form (BDNF) from Exiliboa placata (Oaxacan dwarf boa).